The sequence spans 179 residues: Large ribosomal subunit protein uL6 (179 aa).

The protein belongs to the universal ribosomal protein uL6 family. Part of the 50S ribosomal subunit.

This protein binds to the 23S rRNA, and is important in its secondary structure. It is located near the subunit interface in the base of the L7/L12 stalk, and near the tRNA binding site of the peptidyltransferase center. This is Large ribosomal subunit protein uL6 from Chlorobium phaeobacteroides (strain DSM 266 / SMG 266 / 2430).